The primary structure comprises 132 residues: Small ribosomal subunit protein uS8 (132 aa).

This sequence belongs to the universal ribosomal protein uS8 family. Part of the 30S ribosomal subunit. Contacts proteins S5 and S12.

In terms of biological role, one of the primary rRNA binding proteins, it binds directly to 16S rRNA central domain where it helps coordinate assembly of the platform of the 30S subunit. In Corynebacterium jeikeium (strain K411), this protein is Small ribosomal subunit protein uS8.